The following is a 388-amino-acid chain: Processive diacylglycerol beta-glucosyltransferase (388 aa).

This sequence belongs to the glycosyltransferase 28 family. UgtP subfamily.

It is found in the cell membrane. The enzyme catalyses a 1,2-diacyl-3-O-(beta-D-glucopyranosyl)-sn-glycerol + UDP-alpha-D-glucose = a 1,2-diacyl-3-O-(beta-D-Glc-(1-&gt;6)-beta-D-Glc)-sn-glycerol + UDP + H(+). The catalysed reaction is a 1,2-diacyl-3-O-(beta-D-Glc-(1-&gt;6)-beta-D-Glc)-sn-glycerol + UDP-alpha-D-glucose = a 1,2-diacyl-3-O-(beta-D-Glc-(1-&gt;6)-beta-D-Glc-(1-&gt;6)-beta-D-Glc)-sn-glycerol + UDP + H(+). It carries out the reaction a 1,2-diacyl-sn-glycerol + UDP-alpha-D-glucose = a 1,2-diacyl-3-O-(beta-D-glucopyranosyl)-sn-glycerol + UDP + H(+). Its pathway is glycolipid metabolism; diglucosyl-diacylglycerol biosynthesis. In terms of biological role, processive glucosyltransferase involved in the biosynthesis of both the bilayer- and non-bilayer-forming membrane glucolipids. Is able to successively transfer up to three glucosyl residues to diacylglycerol (DAG), thereby catalyzing the formation of beta-monoglucosyl-DAG (3-O-(beta-D-glucopyranosyl)-1,2-diacyl-sn-glycerol), beta-diglucosyl-DAG (3-O-(beta-D-glucopyranosyl-beta-(1-&gt;6)-D-glucopyranosyl)-1,2-diacyl-sn-glycerol) and beta-triglucosyl-DAG (3-O-(beta-D-glucopyranosyl-beta-(1-&gt;6)-D-glucopyranosyl-beta-(1-&gt;6)-D-glucopyranosyl)-1,2-diacyl-sn-glycerol). Beta-diglucosyl-DAG is the predominant glycolipid found in Bacillales and is also used as a membrane anchor for lipoteichoic acid (LTA). This chain is Processive diacylglycerol beta-glucosyltransferase, found in Bacillus cereus (strain ZK / E33L).